The chain runs to 307 residues: Thioredoxin reductase (307 aa).

D36 to K43 is an FAD binding site. A disulfide bridge links C138 with C141. FAD is bound at residue D278–I287.

It belongs to the class-II pyridine nucleotide-disulfide oxidoreductase family. In terms of assembly, homodimer. The cofactor is FAD.

It is found in the cytoplasm. It carries out the reaction [thioredoxin]-dithiol + NADP(+) = [thioredoxin]-disulfide + NADPH + H(+). The sequence is that of Thioredoxin reductase (trxB) from Mycoplasmopsis pulmonis (strain UAB CTIP) (Mycoplasma pulmonis).